Here is a 494-residue protein sequence, read N- to C-terminus: DEAD-box ATP-dependent RNA helicase 20 (494 aa).

Over residues 1–20 the composition is skewed to basic and acidic residues; the sequence is MSRFDGRAADPGSYRDRRSE. A disordered region spans residues 1–39; that stretch reads MSRFDGRAADPGSYRDRRSEGAFGGGTRAFAPTSKADSA. The segment covering 29–39 has biased composition (low complexity); sequence AFAPTSKADSA. The short motif at 91-119 is the Q motif element; the sequence is REFRDVGFPEYVLQEITKAGFVEPTPIQS. The Helicase ATP-binding domain occupies 122–297; it reads WPMALRGRDL…RNFLFDPYKV (176 aa). 135-142 is an ATP binding site; that stretch reads AETGSGKT. The short motif at 245-248 is the DEAD box element; sequence DEAD. Positions 325 to 470 constitute a Helicase C-terminal domain; it reads KLVNLLEDIM…KVSPELANMG (146 aa). The segment at 465-494 is disordered; that stretch reads ELANMGRGAPPPSSGHRDRYRGYGGGRSWS.

The protein belongs to the DEAD box helicase family. DDX5/DBP2 subfamily.

Its subcellular location is the nucleus. It carries out the reaction ATP + H2O = ADP + phosphate + H(+). In terms of biological role, ATP-dependent RNA helicase involved nonsense-mediated mRNA decay and ribosome biogenesis through rRNA processing. This is DEAD-box ATP-dependent RNA helicase 20 from Oryza sativa subsp. japonica (Rice).